A 91-amino-acid chain; its full sequence is Small ribosomal subunit protein uS19 (91 aa).

Residues 72 to 91 (GEFSPTRKFGGHGDDKKKKK) form a disordered region. Basic and acidic residues predominate over residues 82 to 91 (GHGDDKKKKK).

This sequence belongs to the universal ribosomal protein uS19 family.

Protein S19 forms a complex with S13 that binds strongly to the 16S ribosomal RNA. The chain is Small ribosomal subunit protein uS19 from Spiroplasma kunkelii.